Here is a 38-residue protein sequence, read N- to C-terminus: Photosystem II reaction center protein L (38 aa).

Residues 17-37 (SLYWGLLLIFVLAILFSSYIF) traverse the membrane as a helical segment.

This sequence belongs to the PsbL family. As to quaternary structure, PSII is composed of 1 copy each of membrane proteins PsbA, PsbB, PsbC, PsbD, PsbE, PsbF, PsbH, PsbI, PsbJ, PsbK, PsbL, PsbM, PsbT, PsbX, PsbY, PsbZ, Psb30/Ycf12, at least 3 peripheral proteins of the oxygen-evolving complex and a large number of cofactors. It forms dimeric complexes.

The protein resides in the plastid. The protein localises to the chloroplast thylakoid membrane. Its function is as follows. One of the components of the core complex of photosystem II (PSII). PSII is a light-driven water:plastoquinone oxidoreductase that uses light energy to abstract electrons from H(2)O, generating O(2) and a proton gradient subsequently used for ATP formation. It consists of a core antenna complex that captures photons, and an electron transfer chain that converts photonic excitation into a charge separation. This subunit is found at the monomer-monomer interface and is required for correct PSII assembly and/or dimerization. In Nephroselmis olivacea (Green alga), this protein is Photosystem II reaction center protein L.